Here is a 415-residue protein sequence, read N- to C-terminus: Tyrosine--tRNA ligase (415 aa).

Tyr-33 contributes to the L-tyrosine binding site. Positions 38–47 match the 'HIGH' region motif; that stretch reads PSGESLHLGN. Residues Tyr-161 and Gln-165 each coordinate L-tyrosine. The 'KMSKS' region motif lies at 225 to 229; it reads KFGKS. ATP is bound at residue Lys-228. The 65-residue stretch at 350-414 folds into the S4 RNA-binding domain; that stretch reads MVIDFLLQAK…KKNYFIVVWK (65 aa).

It belongs to the class-I aminoacyl-tRNA synthetase family. TyrS type 1 subfamily. In terms of assembly, homodimer.

Its subcellular location is the cytoplasm. It catalyses the reaction tRNA(Tyr) + L-tyrosine + ATP = L-tyrosyl-tRNA(Tyr) + AMP + diphosphate + H(+). Its function is as follows. Catalyzes the attachment of tyrosine to tRNA(Tyr) in a two-step reaction: tyrosine is first activated by ATP to form Tyr-AMP and then transferred to the acceptor end of tRNA(Tyr). This Mycoplasmoides gallisepticum (strain R(low / passage 15 / clone 2)) (Mycoplasma gallisepticum) protein is Tyrosine--tRNA ligase.